We begin with the raw amino-acid sequence, 525 residues long: GMP synthase [glutamine-hydrolyzing] (525 aa).

A Glutamine amidotransferase type-1 domain is found at 8 to 206; sequence PLLILDFGSQ…VVDICKAPTE (199 aa). The Nucleophile role is filled by Cys85. Residues His180 and Glu182 contribute to the active site. One can recognise a GMPS ATP-PPase domain in the interval 207–400; that stretch reads WTPEHIIDEA…LGLPHDMVYR (194 aa). ATP is bound at residue 234–240; sequence SGGVDSS.

As to quaternary structure, homodimer.

The enzyme catalyses XMP + L-glutamine + ATP + H2O = GMP + L-glutamate + AMP + diphosphate + 2 H(+). Its pathway is purine metabolism; GMP biosynthesis; GMP from XMP (L-Gln route): step 1/1. Functionally, catalyzes the synthesis of GMP from XMP. The chain is GMP synthase [glutamine-hydrolyzing] from Legionella pneumophila (strain Corby).